A 474-amino-acid chain; its full sequence is Iroquois-class homeodomain protein IRX-2 (474 aa).

A DNA-binding region (homeobox; TALE-type) is located at residues 115-177; the sequence is DPAYRKNATR…NARRRLKKEN (63 aa). Disordered regions lie at residues 177 to 220, 262 to 373, and 420 to 461; these read NKMT…EDEG, EDLE…PGGS, and PGET…DTSE. Ser187 bears the Phosphoserine mark. Basic and acidic residues predominate over residues 196–210; the sequence is DASRSKEESSDKAQD. The span at 262 to 275 shows a compositional bias: acidic residues; sequence EDLEDEEDEEDECE. Composition is skewed to low complexity over residues 293 to 305 and 358 to 373; these read EAPL…EAAP and PAAA…PGGS.

It belongs to the TALE/IRO homeobox family. As to expression, expressed in specific and overlapping patterns with Irx1 and Irx3 in the developing and adult metanephric kidney. In the adult metanephros, renal expression is found in the loop of Henle in the S3 proximal tubule segment and in the thick ascending limb (TAL) of the distal tubule.

It is found in the nucleus. The polypeptide is Iroquois-class homeodomain protein IRX-2 (Irx2) (Mus musculus (Mouse)).